Consider the following 213-residue polypeptide: Uridine kinase (213 aa).

15 to 22 (GASASGKS) is a binding site for ATP.

The protein belongs to the uridine kinase family.

It is found in the cytoplasm. It carries out the reaction uridine + ATP = UMP + ADP + H(+). The catalysed reaction is cytidine + ATP = CMP + ADP + H(+). It participates in pyrimidine metabolism; CTP biosynthesis via salvage pathway; CTP from cytidine: step 1/3. Its pathway is pyrimidine metabolism; UMP biosynthesis via salvage pathway; UMP from uridine: step 1/1. The protein is Uridine kinase of Escherichia coli O157:H7.